The chain runs to 145 residues: Endoribonuclease YbeY (145 aa).

Positions 109, 113, and 119 each coordinate Zn(2+).

This sequence belongs to the endoribonuclease YbeY family. Zn(2+) is required as a cofactor.

The protein localises to the cytoplasm. Single strand-specific metallo-endoribonuclease involved in late-stage 70S ribosome quality control and in maturation of the 3' terminus of the 16S rRNA. The protein is Endoribonuclease YbeY of Ruthia magnifica subsp. Calyptogena magnifica.